The chain runs to 638 residues: Chaperone protein HtpG (638 aa).

The interval Met1 to Arg343 is a; substrate-binding. The b stretch occupies residues Glu344–Lys557. Residues Ile558–Ala638 form a c region.

Belongs to the heat shock protein 90 family. As to quaternary structure, homodimer.

It is found in the cytoplasm. In terms of biological role, molecular chaperone. Has ATPase activity. This chain is Chaperone protein HtpG, found in Nitrobacter hamburgensis (strain DSM 10229 / NCIMB 13809 / X14).